We begin with the raw amino-acid sequence, 324 residues long: Putative exosome complex exonuclease RRP42 (324 aa).

It belongs to the RNase PH family. As to quaternary structure, component of the RNA exosome complex.

It localises to the nucleus. Its subcellular location is the nucleolus. The protein resides in the cytoplasm. Non-catalytic component of the RNA exosome complex which has 3'-&gt;5' exoribonuclease activity and participates in a multitude of cellular RNA processing and degradation events. The sequence is that of Putative exosome complex exonuclease RRP42 (exosc7) from Dictyostelium discoideum (Social amoeba).